The primary structure comprises 266 residues: Glucosamine-6-phosphate deaminase (266 aa).

Residue D72 is the Proton acceptor; for enolization step of the active site. Residue D141 is the For ring-opening step of the active site. H143 functions as the Proton acceptor; for ring-opening step in the catalytic mechanism. E148 acts as the For ring-opening step in catalysis.

The protein belongs to the glucosamine/galactosamine-6-phosphate isomerase family. NagB subfamily. In terms of assembly, homohexamer; trimer of disulfide-linked dimers.

It catalyses the reaction alpha-D-glucosamine 6-phosphate + H2O = beta-D-fructose 6-phosphate + NH4(+). The protein operates within amino-sugar metabolism; N-acetylneuraminate degradation; D-fructose 6-phosphate from N-acetylneuraminate: step 5/5. With respect to regulation, allosterically activated by N-acetylglucosamine 6-phosphate (GlcNAc6P). Its function is as follows. Catalyzes the reversible isomerization-deamination of glucosamine 6-phosphate (GlcN6P) to form fructose 6-phosphate (Fru6P) and ammonium ion. This is Glucosamine-6-phosphate deaminase from Shigella boydii serotype 18 (strain CDC 3083-94 / BS512).